A 162-amino-acid polypeptide reads, in one-letter code: Ribosome maturation factor RimP (162 aa).

The protein belongs to the RimP family.

It is found in the cytoplasm. Required for maturation of 30S ribosomal subunits. The chain is Ribosome maturation factor RimP from Leptospira borgpetersenii serovar Hardjo-bovis (strain JB197).